The chain runs to 201 residues: FMN reductase (NADH) RutF (201 aa).

A disordered region spans residues 169–201 (APRSGAAPAEPARAARALGARPAEGPALALRSA).

This sequence belongs to the non-flavoprotein flavin reductase family. RutF subfamily.

The enzyme catalyses FMNH2 + NAD(+) = FMN + NADH + 2 H(+). Catalyzes the reduction of FMN to FMNH2 which is used to reduce pyrimidine by RutA via the Rut pathway. This is FMN reductase (NADH) RutF from Methylorubrum extorquens (strain ATCC 14718 / DSM 1338 / JCM 2805 / NCIMB 9133 / AM1) (Methylobacterium extorquens).